The primary structure comprises 364 residues: 4-hydroxythreonine-4-phosphate dehydrogenase (364 aa).

H148 and T149 together coordinate substrate. Residues H177, H216, and H301 each contribute to the a divalent metal cation site. Substrate-binding residues include K309, N318, and R327.

It belongs to the PdxA family. Homodimer. It depends on Zn(2+) as a cofactor. Mg(2+) is required as a cofactor. The cofactor is Co(2+).

Its subcellular location is the cytoplasm. The enzyme catalyses 4-(phosphooxy)-L-threonine + NAD(+) = 3-amino-2-oxopropyl phosphate + CO2 + NADH. Its pathway is cofactor biosynthesis; pyridoxine 5'-phosphate biosynthesis; pyridoxine 5'-phosphate from D-erythrose 4-phosphate: step 4/5. Functionally, catalyzes the NAD(P)-dependent oxidation of 4-(phosphooxy)-L-threonine (HTP) into 2-amino-3-oxo-4-(phosphooxy)butyric acid which spontaneously decarboxylates to form 3-amino-2-oxopropyl phosphate (AHAP). The chain is 4-hydroxythreonine-4-phosphate dehydrogenase from Campylobacter jejuni subsp. jejuni serotype O:23/36 (strain 81-176).